Consider the following 398-residue polypeptide: Phosphoglycerate kinase (398 aa).

Residues D21–N23, R36, H59–R62, R119, and R157 each bind substrate. ATP-binding positions include K208, G296, E327, and G354–S357.

This sequence belongs to the phosphoglycerate kinase family. In terms of assembly, monomer.

Its subcellular location is the cytoplasm. It catalyses the reaction (2R)-3-phosphoglycerate + ATP = (2R)-3-phospho-glyceroyl phosphate + ADP. The protein operates within carbohydrate degradation; glycolysis; pyruvate from D-glyceraldehyde 3-phosphate: step 2/5. In Streptococcus pneumoniae serotype 4 (strain ATCC BAA-334 / TIGR4), this protein is Phosphoglycerate kinase.